Here is a 590-residue protein sequence, read N- to C-terminus: NADH-ubiquinone oxidoreductase chain 5 (590 aa).

15 helical membrane-spanning segments follow: residues Met1–Met21, Leu31–Leu51, Leu77–Tyr97, Ile104–Ala124, Leu130–Gly150, Ile167–Met187, Leu190–Thr210, Thr230–Ile250, Ile261–Ala281, Ala314–Ile336, Leu355–Leu375, Ile398–Phe418, His439–Gln461, Val466–Leu486, and Met568–Met588.

The protein belongs to the complex I subunit 5 family.

It localises to the mitochondrion inner membrane. It carries out the reaction a ubiquinone + NADH + 5 H(+)(in) = a ubiquinol + NAD(+) + 4 H(+)(out). In terms of biological role, core subunit of the mitochondrial membrane respiratory chain NADH dehydrogenase (Complex I) that is believed to belong to the minimal assembly required for catalysis. Complex I functions in the transfer of electrons from NADH to the respiratory chain. The immediate electron acceptor for the enzyme is believed to be ubiquinone. This is NADH-ubiquinone oxidoreductase chain 5 (MT-ND5) from Lycodon semicarinatus (Ryukyu odd-tooth snake).